Consider the following 149-residue polypeptide: Alpha-crystallin A chain (149 aa).

The 109-residue stretch at 41–149 folds into the sHSP domain; that stretch reads LFRTVLESGI…DTSYSERPIP (109 aa). The Zn(2+) site is built by H89, E91, and H96.

It belongs to the small heat shock protein (HSP20) family. As to quaternary structure, heteropolymer composed of three CRYAA and one CRYAB subunits. Inter-subunit bridging via zinc ions enhances stability, which is crucial as there is no protein turn over in the lens. Zinc coordination is achieved at least by His-89, Glu-91 and His-96. His-83 and Glu-85 come from the same molecule within the oligomer, while His-90 residue is provided by another molecule. Can also form homodimers and homotetramers (dimers of dimers) which serve as the building blocks of homooligomers.

It is found in the cytoplasm. The protein localises to the nucleus. Functionally, contributes to the transparency and refractive index of the lens. May act as a chaperone, preventing aggregation of various proteins under a wide range of stress conditions. In Trachemys scripta elegans (Red-eared slider turtle), this protein is Alpha-crystallin A chain (CRYAA).